The chain runs to 201 residues: Glycerol-3-phosphate acyltransferase (201 aa).

A run of 5 helical transmembrane segments spans residues 5–25, 55–75, 87–107, 118–138, and 164–184; these read LLGALLVAAGYLAGSIPFGVV, KMGVLVLVLDAAKAIVPILVA, FWVTAVAVAAFVGHLFPVWLG, LGIFAVLAPWAALAGLVGYAV, and TYGPRHPVSWAGLAIALLIFV.

Belongs to the PlsY family. As to quaternary structure, probably interacts with PlsX.

Its subcellular location is the cell inner membrane. The enzyme catalyses an acyl phosphate + sn-glycerol 3-phosphate = a 1-acyl-sn-glycero-3-phosphate + phosphate. It functions in the pathway lipid metabolism; phospholipid metabolism. Catalyzes the transfer of an acyl group from acyl-phosphate (acyl-PO(4)) to glycerol-3-phosphate (G3P) to form lysophosphatidic acid (LPA). This enzyme utilizes acyl-phosphate as fatty acyl donor, but not acyl-CoA or acyl-ACP. The chain is Glycerol-3-phosphate acyltransferase from Anaeromyxobacter dehalogenans (strain 2CP-1 / ATCC BAA-258).